We begin with the raw amino-acid sequence, 350 residues long: Methionine import ATP-binding protein MetN 1 (350 aa).

Positions 12–251 constitute an ABC transporter domain; that stretch reads IDLKNITVLF…PSREVTQDFV (240 aa). 48–55 is a binding site for ATP; sequence GYSGAGKS.

Belongs to the ABC transporter superfamily. Methionine importer (TC 3.A.1.24) family. As to quaternary structure, the complex is composed of two ATP-binding proteins (MetN), two transmembrane proteins (MetI) and a solute-binding protein (MetQ).

Its subcellular location is the cell membrane. The catalysed reaction is L-methionine(out) + ATP + H2O = L-methionine(in) + ADP + phosphate + H(+). The enzyme catalyses D-methionine(out) + ATP + H2O = D-methionine(in) + ADP + phosphate + H(+). In terms of biological role, part of the ABC transporter complex MetNIQ involved in methionine import. Responsible for energy coupling to the transport system. The polypeptide is Methionine import ATP-binding protein MetN 1 (Oenococcus oeni (strain ATCC BAA-331 / PSU-1)).